We begin with the raw amino-acid sequence, 373 residues long: Glutamine synthetase (373 aa).

At Ala2 the chain carries N-acetylalanine. The interval 2–25 (ATSASSHLNKGIKQMYMSLPQGEK) is required for glutamine-induced ubiquitination by CRL4(CRBN) and proteasomal degradation. 2 positions are modified to N6-acetyllysine: Lys11 and Lys14. The GS beta-grasp domain maps to 24–106 (EKVQAMYIWV…VFCEVFKYNQ (83 aa)). Tyr104 is subject to Phosphotyrosine. A GS catalytic domain is found at 113-373 (LRHTCKRIMD…TGDQPFQYKN (261 aa)). Position 134 (Glu134) interacts with ATP. Mn(2+) is bound by residues Glu134, Glu136, Glu196, and Glu203. 203-208 (EFQIGP) serves as a coordination point for ATP. Residue 246–247 (NW) coordinates L-glutamate. His253 is a Mn(2+) binding site. Residues 255–257 (NFS), Arg319, and Arg324 each bind ATP. Residue Arg319 participates in L-glutamate binding. Position 336-338 (336-338 (YFE)) interacts with ADP. Glu338 lines the Mn(2+) pocket. Position 340 (Arg340) interacts with L-glutamate. Phosphoserine is present on Ser343.

This sequence belongs to the glutamine synthetase family. As to quaternary structure, decamer; composed of two pentamers. Interacts with PALMD. Interacts with RHOJ. Interacts with BEST2; this interaction tethers a fraction of GLUL to the membrane, causing a decrease of cytosolic glutamine synthase (GS) activity and inhibits the chloride channel activity of BEST2 by affecting the gating at the aperture in the absence of intracellular glutamate. Mg(2+) serves as cofactor. It depends on Mn(2+) as a cofactor. Post-translationally, palmitoylated; undergoes autopalmitoylation. In terms of processing, acetylated by EP300/p300; acetylation is stimulated by increased glutamine levels and promotes ubiquitin-mediated proteasomal degradation. Ubiquitinated by ZNRF1. Ubiquitinated by the DCX (DDB1-CUL4-X-box) E3 ubiquitin-protein ligase complex called CRL4(CRBN), leading to proteasomal degradation.

The protein localises to the cytoplasm. It localises to the cytosol. It is found in the microsome. Its subcellular location is the mitochondrion. The protein resides in the cell membrane. It carries out the reaction L-glutamate + NH4(+) + ATP = L-glutamine + ADP + phosphate + H(+). The enzyme catalyses L-cysteinyl-[protein] + hexadecanoyl-CoA = S-hexadecanoyl-L-cysteinyl-[protein] + CoA. Glutamine synthetase activity is inhibited by methionine sulfoximine (MSO). In terms of biological role, glutamine synthetase that catalyzes the ATP-dependent conversion of glutamate and ammonia to glutamine. Its role depends on tissue localization: in the brain, it regulates the levels of toxic ammonia and converts neurotoxic glutamate to harmless glutamine, whereas in the liver, it is one of the enzymes responsible for the removal of ammonia. Plays a key role in ammonium detoxification during erythropoiesis: the glutamine synthetase activity is required to remove ammonium generated by porphobilinogen deaminase (HMBS) during heme biosynthesis to prevent ammonium accumulation and oxidative stress. Essential for proliferation of fetal skin fibroblasts. Independently of its glutamine synthetase activity, required for endothelial cell migration during vascular development. Involved in angiogenesis by regulating membrane localization and activation of the GTPase RHOJ, possibly by promoting RHOJ palmitoylation. May act as a palmitoyltransferase for RHOJ: able to autopalmitoylate and then transfer the palmitoyl group to RHOJ. Plays a role in ribosomal 40S subunit biogenesis. Through the interaction with BEST2, inhibits BEST2 channel activity by affecting the gating at the aperture in the absence of intracellular L-glutamate, but sensitizes BEST2 to intracellular L-glutamate, which promotes the opening of BEST2 and thus relieves its inhibitory effect on BEST2. The protein is Glutamine synthetase of Cricetulus griseus (Chinese hamster).